Reading from the N-terminus, the 129-residue chain is MAKEAARVKRRERKNIASGVAHVNASFNNTMITITDAQGNTISWSSAGAMGFKGSRKSTPYAAQLAAEDAARKAAEHGMRTLEVEVSGPGSGRESALRALQAAGFLVTSIRDVTPIPHNGCRPRKRRRV.

The protein belongs to the universal ribosomal protein uS11 family. In terms of assembly, part of the 30S ribosomal subunit. Interacts with proteins S7 and S18. Binds to IF-3.

Its function is as follows. Located on the platform of the 30S subunit, it bridges several disparate RNA helices of the 16S rRNA. Forms part of the Shine-Dalgarno cleft in the 70S ribosome. The protein is Small ribosomal subunit protein uS11 of Azorhizobium caulinodans (strain ATCC 43989 / DSM 5975 / JCM 20966 / LMG 6465 / NBRC 14845 / NCIMB 13405 / ORS 571).